A 257-amino-acid chain; its full sequence is Probable transcriptional regulatory protein SRU_2667 (257 aa).

Basic residues predominate over residues methionine 1–lysine 15. The disordered stretch occupies residues methionine 1 to valine 25.

This sequence belongs to the TACO1 family.

The protein resides in the cytoplasm. The chain is Probable transcriptional regulatory protein SRU_2667 from Salinibacter ruber (strain DSM 13855 / M31).